Reading from the N-terminus, the 428-residue chain is Methyl-branched lipid omega-hydroxylase (428 aa).

Residue Cys379 coordinates heme.

This sequence belongs to the cytochrome P450 family. The cofactor is heme.

It carries out the reaction a methyl-branched lipid + O2 + 2 reduced ferredoxin [iron-sulfur] cluster + 2 H(+) = an omega-hydroxy-methyl-branched lipid + H2O + 2 oxidized ferredoxin [iron-sulfur] cluster.. The catalysed reaction is cholest-4-en-3-one + 6 reduced [2Fe-2S]-[ferredoxin] + 3 O2 + 5 H(+) = (25R)-3-oxocholest-4-en-26-oate + 6 oxidized [2Fe-2S]-[ferredoxin] + 4 H2O. It functions in the pathway lipid metabolism; branched-chain fatty acid metabolism. Its function is as follows. Primarily hydroxylates the omega-carbon of a number of methyl-branched lipids, including (2E,6E)-farnesol, phytanate, geranylgeraniol, 15-methylpalmitate and (2E,6E)-farnesyl diphosphate. Also catalyzes the sequential oxidation of the terminal methyl of cholest-4-en-3-one into (25R)-26-hydroxycholest-4-en-3-one (alcohol), (25R)-26-oxocholest-4-en-3-one (aldehyde), to finally yield the carboxylic acid (25R)-3-oxocholest-4-en-26-oate. Also able to sequentially oxidize cholesterol itself, not only cholest-4-en-3-one. This Mycobacterium bovis (strain ATCC BAA-935 / AF2122/97) protein is Methyl-branched lipid omega-hydroxylase (cyp124).